Reading from the N-terminus, the 307-residue chain is D-alanine--D-alanine ligase (307 aa).

One can recognise an ATP-grasp domain in the interval 101 to 301; the sequence is KDVLRAAGVP…FGELVRWMVE (201 aa). An ATP-binding site is contributed by 128 to 182; the sequence is MTPPYVVKPLGEGSSFGVIIVRADQTHPPQELTRDDWAYGDLVLVERFVAGRELT. The Mg(2+) site is built by aspartate 251, glutamate 268, and asparagine 270.

Belongs to the D-alanine--D-alanine ligase family. Mg(2+) serves as cofactor. Requires Mn(2+) as cofactor.

The protein resides in the cytoplasm. It catalyses the reaction 2 D-alanine + ATP = D-alanyl-D-alanine + ADP + phosphate + H(+). It participates in cell wall biogenesis; peptidoglycan biosynthesis. Its function is as follows. Cell wall formation. The chain is D-alanine--D-alanine ligase from Methylocella silvestris (strain DSM 15510 / CIP 108128 / LMG 27833 / NCIMB 13906 / BL2).